We begin with the raw amino-acid sequence, 441 residues long: uncharacterized protein (441 aa).

217 to 224 (GETGTGKT) provides a ligand contact to ATP.

Belongs to the GSP E family.

This is an uncharacterized protein from Bacillus anthracis.